The chain runs to 528 residues: MSHRARHQLLALPGIIFLVLFPIILSLWIAFLWAKSEVNNQLRTFAQLALDKSELVIRQADLVSDAAERYQGQVCTPAHQKRMLNIIRGYLYINELIYARDNHFLCSSLIAPVNGYTIAPADYKREPNVSIYYYRDTPFFSGYKMTYMQRGNYVAVINPLFWSEVMSDDPTLQWGVYDTVTKTFFSLSKEASAATFSPLIHLKDLTVQRNGYLYATVYSTKRPIAAIVATSYQRLITHFYNHLIFALPAGILGSLVLLLLWLRIRQNYLSPKRKLQRALEKHQLCLYYQPIIDIKTEKCIGAEALLRWPGEQGQIMNPAEFIPLAEKEGMIEQITDYVIDNVFRDLGDYLATHADRYVSINLSASDFHTSRLIARINQKTEQYAVRPQQIKFEVTEHAFLDVDKMTPIILAFRQAGYEVAIDDFGIGYSNLHNLKSLNVDILKIDKSFVETLTTHKTSHLIAEHIIELAHSLGLKTIAEGVETEEQVNWLRKRGVRYCQGWFFAKAMPPQVFMQWMEQLPARELTRGQ.

Transmembrane regions (helical) follow at residues 14–34 (GIIFLVLFPIILSLWIAFLWA) and 242–262 (HLIFALPAGILGSLVLLLLWL). One can recognise an EAL domain in the interval 268-520 (YLSPKRKLQR…VFMQWMEQLP (253 aa)).

The protein resides in the cell inner membrane. The enzyme catalyses 3',3'-c-di-GMP + H2O = 5'-phosphoguanylyl(3'-&gt;5')guanosine + H(+). Its function is as follows. Phosphodiesterase (PDE) that catalyzes the hydrolysis of cyclic-di-GMP (c-di-GMP) to 5'-pGpG. Cyclic-di-GMP is a second messenger which controls cell surface-associated traits in bacteria. Overexpression reduces biofilm formation. This Escherichia coli (strain K12) protein is Probable cyclic di-GMP phosphodiesterase PdeC.